Here is a 275-residue protein sequence, read N- to C-terminus: uncharacterized protein (275 aa).

2 disordered regions span residues 1 to 25 (MIGG…DQEQ) and 185 to 275 (QRGE…RHHM). A compositionally biased stretch (basic and acidic residues) spans 228 to 239 (KPGDGEENAKDD).

This is an uncharacterized protein from Neurospora crassa (strain ATCC 24698 / 74-OR23-1A / CBS 708.71 / DSM 1257 / FGSC 987).